We begin with the raw amino-acid sequence, 317 residues long: Protoheme IX farnesyltransferase (317 aa).

The next 8 helical transmembrane spans lie at 39–59 (VLYL…GGIN), 60–80 (PILG…AGAI), 109–129 (GALA…WLAT), 131–151 (LLAA…YTMW), 160–180 (IVIG…AATG), 184–204 (LLPV…FWAL), 249–269 (VLHL…LAFV), and 297–317 (FKFS…DHLV).

The protein belongs to the UbiA prenyltransferase family. Protoheme IX farnesyltransferase subfamily.

The protein resides in the cell inner membrane. The catalysed reaction is heme b + (2E,6E)-farnesyl diphosphate + H2O = Fe(II)-heme o + diphosphate. The protein operates within porphyrin-containing compound metabolism; heme O biosynthesis; heme O from protoheme: step 1/1. In terms of biological role, converts heme B (protoheme IX) to heme O by substitution of the vinyl group on carbon 2 of heme B porphyrin ring with a hydroxyethyl farnesyl side group. The chain is Protoheme IX farnesyltransferase from Acidiphilium cryptum (strain JF-5).